The chain runs to 184 residues: Casparian strip membrane protein 3 (184 aa).

Topologically, residues 1-22 (MEGSGEHGETSKGPLSKGVSRG) are cytoplasmic. The helical transmembrane segment at 23-43 (LCILDLIFRVIAVIGTLASAI) threads the bilayer. Topologically, residues 44–72 (AMGTTNQTMPFFTQFVQFKERYSDLPTLT) are extracellular. The N-linked (GlcNAc...) asparagine glycan is linked to N49. The chain crosses the membrane as a helical span at residues 73–93 (FFVVANSIASAYLIISLPLSI). Residues 94 to 105 (VHIIRSRAKYSR) are Cytoplasmic-facing. Residues 106 to 126 (LILIFFDVAMLALVTAAASAG) form a helical membrane-spanning segment. Residues 127-159 (AAIVYLAHNGNVSANWFAICQQFDSFCERISGS) lie on the Extracellular side of the membrane. A glycan (N-linked (GlcNAc...) asparagine) is linked at N137. Residues 160-180 (LIGSFAAMVVLILLILLSAVA) form a helical membrane-spanning segment. Over 181-184 (LARR) the chain is Cytoplasmic.

It belongs to the Casparian strip membrane proteins (CASP) family. Homodimer and heterodimers.

It localises to the cell membrane. Regulates membrane-cell wall junctions and localized cell wall deposition. Required for establishment of the Casparian strip membrane domain (CSD) and the subsequent formation of Casparian strips, a cell wall modification of the root endodermis that determines an apoplastic barrier between the intraorganismal apoplasm and the extraorganismal apoplasm and prevents lateral diffusion. The sequence is that of Casparian strip membrane protein 3 from Brachypodium distachyon (Purple false brome).